Reading from the N-terminus, the 657-residue chain is 1-deoxy-D-xylulose-5-phosphate synthase (657 aa).

Thiamine diphosphate contacts are provided by residues His-73 and 113 to 115; that span reads SHA. Mg(2+) is bound at residue Asp-145. Thiamine diphosphate-binding positions include 146–147, Asn-175, Tyr-293, and Glu-375; that span reads GA. Asn-175 contributes to the Mg(2+) binding site.

This sequence belongs to the transketolase family. DXPS subfamily. As to quaternary structure, homodimer. Mg(2+) is required as a cofactor. The cofactor is thiamine diphosphate.

The catalysed reaction is D-glyceraldehyde 3-phosphate + pyruvate + H(+) = 1-deoxy-D-xylulose 5-phosphate + CO2. Its pathway is metabolic intermediate biosynthesis; 1-deoxy-D-xylulose 5-phosphate biosynthesis; 1-deoxy-D-xylulose 5-phosphate from D-glyceraldehyde 3-phosphate and pyruvate: step 1/1. Its function is as follows. Catalyzes the acyloin condensation reaction between C atoms 2 and 3 of pyruvate and glyceraldehyde 3-phosphate to yield 1-deoxy-D-xylulose-5-phosphate (DXP). The protein is 1-deoxy-D-xylulose-5-phosphate synthase of Paenarthrobacter aurescens (strain TC1).